The following is a 556-amino-acid chain: DNA ligase B (556 aa).

The active-site N6-AMP-lysine intermediate is the Lys126.

The protein belongs to the NAD-dependent DNA ligase family. LigB subfamily.

The catalysed reaction is NAD(+) + (deoxyribonucleotide)n-3'-hydroxyl + 5'-phospho-(deoxyribonucleotide)m = (deoxyribonucleotide)n+m + AMP + beta-nicotinamide D-nucleotide.. Catalyzes the formation of phosphodiester linkages between 5'-phosphoryl and 3'-hydroxyl groups in double-stranded DNA using NAD as a coenzyme and as the energy source for the reaction. The chain is DNA ligase B from Stutzerimonas stutzeri (strain A1501) (Pseudomonas stutzeri).